We begin with the raw amino-acid sequence, 493 residues long: EGF-containing fibulin-like extracellular matrix protein 1 (493 aa).

A signal peptide spans 1–17 (MLQTVFLTMLTLALVKS). An EGF-like 1; atypical domain is found at 26–71 (YTQCTDGYEWDPVRQQCKDIDECDIVPDACKGGMKCVNHYGGYLCL). The EGF-like 2; calcium-binding domain maps to 173–213 (DIDECTSGTHNCRLDQVCINLRGSFTCHCLPGYQKRGEQCV). 15 disulfide bridges follow: Cys177–Cys190, Cys184–Cys199, Cys201–Cys212, Cys218–Cys228, Cys224–Cys237, Cys239–Cys252, Cys258–Cys268, Cys264–Cys277, Cys279–Cys292, Cys298–Cys309, Cys305–Cys318, Cys320–Cys332, Cys338–Cys350, Cys344–Cys359, and Cys365–Cys377. Residues 214 to 253 (DIDECSVPPYCHQGCVNTPGSFYCQCNPGFQLAANNYTCV) form the EGF-like 3; calcium-binding domain. N-linked (GlcNAc...) asparagine glycosylation is present at Asn249. The EGF-like 4; calcium-binding domain maps to 254 to 293 (DINECDASNQCAQQCYNILGSFICQCNQGYELSSDRLNCE). The tract at residues 259 to 493 (DASNQCAQQC…LTIIVGPFSF (235 aa)) is mediates interaction with TIMP3. An EGF-like 5; calcium-binding domain is found at 294-333 (DIDECRTSSYLCQYQCVNEPGKFSCMCPQGYQVVRSRTCQ). One can recognise an EGF-like 6; calcium-binding domain in the interval 334-378 (DINECETTNECREDEMCWNYHGGFRCYPQNPCQDPYVLTSENRCV).

This sequence belongs to the fibulin family. As to quaternary structure, interacts with ECM1. Interacts with TIMP3. Expressed by olfactory ensheathing cells (at protein level). Detected in lung, intestine and kidney.

Its subcellular location is the secreted. It is found in the extracellular space. It localises to the extracellular matrix. Functionally, binds EGFR, the EGF receptor, inducing EGFR autophosphorylation and the activation of downstream signaling pathways. May play a role in cell adhesion and migration. May function as a negative regulator of chondrocyte differentiation. In the olfactory epithelium, it may regulate glial cell migration, differentiation and the ability of glial cells to support neuronal neurite outgrowth. In Rattus norvegicus (Rat), this protein is EGF-containing fibulin-like extracellular matrix protein 1 (Efemp1).